A 417-amino-acid chain; its full sequence is Serpin H1 (417 aa).

Residues M1 to A18 form the signal peptide. K94 bears the N6-succinyllysine mark. N120 and N125 each carry an N-linked (GlcNAc...) asparagine glycan. S141 is subject to Phosphoserine. K206 is subject to N6-acetyllysine. Residue K295 is modified to N6-succinyllysine. K318 is subject to N6-acetyllysine. Positions R414 to L417 match the Prevents secretion from ER motif.

Belongs to the serpin family.

It is found in the endoplasmic reticulum lumen. Binds specifically to collagen. Could be involved as a chaperone in the biosynthetic pathway of collagen. In Pongo abelii (Sumatran orangutan), this protein is Serpin H1 (SERPINH1).